Here is a 236-residue protein sequence, read N- to C-terminus: Probable apoptosis inhibitor 2 (236 aa).

A BIR repeat occupies 85 to 150 (RKRSFASFKW…AHAADCAFRR (66 aa)). Residues C123, C126, H142, and C146 each contribute to the Zn(2+) site. An RING-type zinc finger spans residues 189–223 (CKVCFVNEKSVCFLPCRHLVVCAECSPRCKRCCVC).

The chain is Probable apoptosis inhibitor 2 (IAP2) from Orgyia pseudotsugata multicapsid polyhedrosis virus (OpMNPV).